Consider the following 179-residue polypeptide: ATP-dependent protease subunit HslV (179 aa).

Thr7 is an active-site residue. Residues Ala163, Cys166, and Thr169 each coordinate Na(+).

The protein belongs to the peptidase T1B family. HslV subfamily. In terms of assembly, a double ring-shaped homohexamer of HslV is capped on each side by a ring-shaped HslU homohexamer. The assembly of the HslU/HslV complex is dependent on binding of ATP.

Its subcellular location is the cytoplasm. It carries out the reaction ATP-dependent cleavage of peptide bonds with broad specificity.. With respect to regulation, allosterically activated by HslU binding. Protease subunit of a proteasome-like degradation complex believed to be a general protein degrading machinery. This is ATP-dependent protease subunit HslV from Amoebophilus asiaticus (strain 5a2).